The following is a 322-amino-acid chain: RING finger protein 113B (322 aa).

Residues 24 to 92 form a disordered region; sequence KPGRKGAAGL…EEAAPESLDV (69 aa). Over residues 46–60 the composition is skewed to low complexity; it reads SSSSGDEGDTVAQPP. A C3H1-type zinc finger spans residues 190-218; it reads DYQPDICKDYKETGFCGFGDSCKFLHDRS. The RING-type zinc-finger motif lies at 256 to 294; it reads CFICRQAFQNPVVTKCRHYFCESCALEHFRATPRCYICD.

This Homo sapiens (Human) protein is RING finger protein 113B (RNF113B).